The chain runs to 328 residues: Phosphatidylglycerol--prolipoprotein diacylglyceryl transferase (328 aa).

The next 3 membrane-spanning stretches (helical) occupy residues Val15–Ser35, Phe58–Tyr78, and Gly106–Thr126. Arg156 lines the a 1,2-diacyl-sn-glycero-3-phospho-(1'-sn-glycerol) pocket. Helical transmembrane passes span Gly242–Leu262 and Ile289–Val309.

This sequence belongs to the Lgt family.

Its subcellular location is the cell inner membrane. It carries out the reaction L-cysteinyl-[prolipoprotein] + a 1,2-diacyl-sn-glycero-3-phospho-(1'-sn-glycerol) = an S-1,2-diacyl-sn-glyceryl-L-cysteinyl-[prolipoprotein] + sn-glycerol 1-phosphate + H(+). It functions in the pathway protein modification; lipoprotein biosynthesis (diacylglyceryl transfer). In terms of biological role, catalyzes the transfer of the diacylglyceryl group from phosphatidylglycerol to the sulfhydryl group of the N-terminal cysteine of a prolipoprotein, the first step in the formation of mature lipoproteins. The chain is Phosphatidylglycerol--prolipoprotein diacylglyceryl transferase from Borrelia garinii subsp. bavariensis (strain ATCC BAA-2496 / DSM 23469 / PBi) (Borreliella bavariensis).